The chain runs to 373 residues: Anhydro-N-acetylmuramic acid kinase (373 aa).

Residue 12-19 (GTSLDGVD) participates in ATP binding.

The protein belongs to the anhydro-N-acetylmuramic acid kinase family.

The enzyme catalyses 1,6-anhydro-N-acetyl-beta-muramate + ATP + H2O = N-acetyl-D-muramate 6-phosphate + ADP + H(+). It functions in the pathway amino-sugar metabolism; 1,6-anhydro-N-acetylmuramate degradation. The protein operates within cell wall biogenesis; peptidoglycan recycling. Its function is as follows. Catalyzes the specific phosphorylation of 1,6-anhydro-N-acetylmuramic acid (anhMurNAc) with the simultaneous cleavage of the 1,6-anhydro ring, generating MurNAc-6-P. Is required for the utilization of anhMurNAc either imported from the medium or derived from its own cell wall murein, and thus plays a role in cell wall recycling. This is Anhydro-N-acetylmuramic acid kinase from Salmonella agona (strain SL483).